The sequence spans 83 residues: Keratin-associated protein 6-1 (83 aa).

The stretch at 9–15 (YGGLGCG) is one RPT 1-1 repeat. An RPT 1-2 repeat occupies 19-25 (YGGLGCG). An RPT 2-1 repeat occupies 44–55 (GYGYGSRSLCGS). An RPT 2-2 repeat occupies 56-67 (GYGYGSRSLCGS).

It belongs to the KRTAP type 6 family. Interacts with wool keratins.

In the wool cortex, wool keratin intermediate filaments are embedded in an interfilamentous matrix, consisting of hair keratin-associated proteins (KRTAP), which are essential for the formation of a rigid and resistant wool shaft through their extensive disulfide bond cross-linking with abundant cysteine residues of wool keratins. The matrix proteins include the high-sulfur and high-glycine-tyrosine keratins. The protein is Keratin-associated protein 6-1 (KRTAP6-1) of Ovis aries (Sheep).